Reading from the N-terminus, the 552-residue chain is Scaffold protein (552 aa).

Belongs to the poxviridae protein D13 family. Homotrimer. Self-assembles to form a layer. Interacts with A17 (via N-terminus); this interaction is necessary for D13 association with membranes.

The protein resides in the membrane. Scaffold protein which forms a transitory spherical honeycomb lattice providing curvature and rigidity to the convex membrane of crescent and immature virions (IV). This association occurs concomitantly with viral membrane formation. Targeted by the drug rifampicin, which prevents the formation of this lattice, and hence virus morphogenesis. In the presence of rifampicin, irregularly shaped membranes that lack the honeycomb layer accumulate around areas of electron-dense viroplasm. This layer is lost from virions during maturation from IV to mature virion (MV), through the proteolysis of A17 N-terminus. This Vertebrata (FPV) protein is Scaffold protein.